The primary structure comprises 118 residues: Large ribosomal subunit protein bL20 (118 aa).

It belongs to the bacterial ribosomal protein bL20 family.

Its function is as follows. Binds directly to 23S ribosomal RNA and is necessary for the in vitro assembly process of the 50S ribosomal subunit. It is not involved in the protein synthesizing functions of that subunit. The chain is Large ribosomal subunit protein bL20 from Sulfurihydrogenibium sp. (strain YO3AOP1).